A 104-amino-acid chain; its full sequence is Type IV secretion system protein PtlB homolog (104 aa).

Residues 30–50 (IALLGIWFSIAFLALFPVALL) form a helical membrane-spanning segment.

This sequence belongs to the virB3 family.

The protein resides in the cell membrane. This is Type IV secretion system protein PtlB homolog (ptlB) from Bordetella parapertussis (strain 12822 / ATCC BAA-587 / NCTC 13253).